The primary structure comprises 357 residues: Protein RecA (357 aa).

Residue 71–78 coordinates ATP; the sequence is GPESSGKT.

It belongs to the RecA family.

It is found in the cytoplasm. Functionally, can catalyze the hydrolysis of ATP in the presence of single-stranded DNA, the ATP-dependent uptake of single-stranded DNA by duplex DNA, and the ATP-dependent hybridization of homologous single-stranded DNAs. It interacts with LexA causing its activation and leading to its autocatalytic cleavage. In Ehrlichia chaffeensis (strain ATCC CRL-10679 / Arkansas), this protein is Protein RecA.